Here is a 586-residue protein sequence, read N- to C-terminus: UvrABC system protein C (586 aa).

The GIY-YIG domain occupies 17–94 (HKPGCYLWKD…IKQYKPRFNL (78 aa)). Positions 201 to 236 (EQVLNHLQQQEIKASEQQNFEAARHFLDLQKAVLEL) constitute a UVR domain.

This sequence belongs to the UvrC family. In terms of assembly, interacts with UvrB in an incision complex.

It is found in the cytoplasm. Its function is as follows. The UvrABC repair system catalyzes the recognition and processing of DNA lesions. UvrC both incises the 5' and 3' sides of the lesion. The N-terminal half is responsible for the 3' incision and the C-terminal half is responsible for the 5' incision. The polypeptide is UvrABC system protein C (Mycoplasma pneumoniae (strain ATCC 29342 / M129 / Subtype 1) (Mycoplasmoides pneumoniae)).